Reading from the N-terminus, the 225-residue chain is Enolase-phosphatase E1 (225 aa).

This sequence belongs to the HAD-like hydrolase superfamily. MasA/MtnC family. As to quaternary structure, monomer. It depends on Mg(2+) as a cofactor.

It carries out the reaction 5-methylsulfanyl-2,3-dioxopentyl phosphate + H2O = 1,2-dihydroxy-5-(methylsulfanyl)pent-1-en-3-one + phosphate. It participates in amino-acid biosynthesis; L-methionine biosynthesis via salvage pathway; L-methionine from S-methyl-5-thio-alpha-D-ribose 1-phosphate: step 3/6. The protein operates within amino-acid biosynthesis; L-methionine biosynthesis via salvage pathway; L-methionine from S-methyl-5-thio-alpha-D-ribose 1-phosphate: step 4/6. Bifunctional enzyme that catalyzes the enolization of 2,3-diketo-5-methylthiopentyl-1-phosphate (DK-MTP-1-P) into the intermediate 2-hydroxy-3-keto-5-methylthiopentenyl-1-phosphate (HK-MTPenyl-1-P), which is then dephosphorylated to form the acireductone 1,2-dihydroxy-3-keto-5-methylthiopentene (DHK-MTPene). This is Enolase-phosphatase E1 from Shewanella loihica (strain ATCC BAA-1088 / PV-4).